A 742-amino-acid chain; its full sequence is Synaptic vesicle glycoprotein 2A (742 aa).

Residues 1–57 (MEEGFRDRAAFIRGAKDIAKEVKKHAAKKVVKGLDRVQDEYSRRSYSRFEEEDDDDD) are interaction with SYT1. The Cytoplasmic segment spans residues 1 to 169 (MEEGFRDRAA…GHGRFQWTLY (169 aa)). The segment covering 40–49 (EYSRRSYSRF) has biased composition (basic and acidic residues). The segment at 40 to 145 (EYSRRSYSRF…RGEAQRRKDR (106 aa)) is disordered. 2 positions are modified to phosphoserine: S80 and S81. T84 bears the Phosphothreonine mark. Residues 122-137 (VRGGLSDGEGPPGGRG) are compositionally biased toward gly residues. S127 is subject to Phosphoserine. The helical transmembrane segment at 170–190 (FVLGLALMADGVEVFVVGFVL) threads the bilayer. Topologically, residues 191-205 (PSAEKDMCLSDSNKG) are extracellular. A helical membrane pass occupies residues 206-226 (MLGLIVYLGMMVGAFLWGGLA). Residues 227–233 (DRLGRRQ) lie on the Cytoplasmic side of the membrane. A helical transmembrane segment spans residues 234–254 (CLLISLSVNSVFAFFSSFVQG). At 255–262 (YGTFLFCR) the chain is on the extracellular side. Residues 263–283 (LLSGVGIGGSIPIVFSYFSEF) form a helical membrane-spanning segment. Over 284 to 294 (LAQEKRGEHLS) the chain is Cytoplasmic. Residues 295-315 (WLCMFWMIGGVYAAAMAWAII) form a helical membrane-spanning segment. The Extracellular segment spans residues 316-334 (PHYGWSFQMGSAYQFHSWR). The helical transmembrane segment at 335–355 (VFVLVCAFPSVFAIGALTTQP) threads the bilayer. The Cytoplasmic segment spans residues 356–447 (ESPRFFLENG…CFSPEYRRIT (92 aa)). S393 carries the phosphoserine modification. A helical transmembrane segment spans residues 448–468 (LMMMGVWFTMSFSYYGLTVWF). Over 469–598 (PDMIRHLQAV…GTGEGAYMVY (130 aa)) the chain is Extracellular. Y480 carries the post-translational modification Phosphotyrosine. 3 N-linked (GlcNAc...) asparagine glycosylation sites follow: N498, N548, and N573. The helical transmembrane segment at 599-619 (FVSFLGTLAVLPGNIVSALLM) threads the bilayer. Residues 620 to 626 (DKIGRLR) lie on the Cytoplasmic side of the membrane. The helical transmembrane segment at 627–647 (MLAGSSVLSCVSCFFLSFGNS) threads the bilayer. Residues 648-651 (ESAM) lie on the Extracellular side of the membrane. A helical membrane pass occupies residues 652–672 (IALLCLFGGVSIASWNALDVL). The Cytoplasmic portion of the chain corresponds to 673-685 (TVELYPSDKRTTA). A helical transmembrane segment spans residues 686–708 (FGFLNALCKLAAVLGISIFTSFV). At 709-712 (GITK) the chain is on the extracellular side. The helical transmembrane segment at 713-731 (AAPILFASAALALGSSLAL) threads the bilayer. Residues 732 to 742 (KLPETRGQVLQ) are Cytoplasmic-facing.

The protein belongs to the major facilitator superfamily. In terms of assembly, interacts with SYT1/synaptotagmin-1 in a calcium-dependent manner. Binds the adapter protein complex AP-2. As to quaternary structure, (Microbial infection) Interacts with C.botulinum neurotoxin type A (BoNT/A, botA). Phosphorylation by CK1 of the N-terminal cytoplasmic domain regulates interaction with SYT1. In terms of processing, N-glycosylated. In terms of tissue distribution, expressed in conventional synapses and cone ribbon synapses in the retina (at protein level). Expressed in diaphragm motor nerve terminals (at protein level). Expressed in hippocampus neurons (at protein level).

The protein localises to the presynapse. The protein resides in the cytoplasmic vesicle. It localises to the secretory vesicle. It is found in the synaptic vesicle membrane. Plays a role in the control of regulated secretion in neural and endocrine cells, enhancing selectively low-frequency neurotransmission. Positively regulates vesicle fusion by maintaining the readily releasable pool of secretory vesicles. In terms of biological role, (Microbial infection) Receptor for C.botulinum neurotoxin type A (BoNT/A, botA); the toxin probably binds via extracellular loop 4. Its function is as follows. (Microbial infection) Possible receptor for C.botulinum neurotoxin type D (BoNT/D, botD); BoNT/D does not bind to extracellular loop 4 as do BoNT/A and BoNT/E. Functionally, (Microbial infection) Receptor for C.botulinum neurotoxin type E (BoNT/E); the toxin probably binds via extracellular loop 4. It probably requires glycosylation of Asn-573. This chain is Synaptic vesicle glycoprotein 2A (Sv2a), found in Mus musculus (Mouse).